The sequence spans 728 residues: 1,4-alpha-glucan branching enzyme GlgB (728 aa).

The active-site Nucleophile is Asp-405. Glu-458 serves as the catalytic Proton donor.

Belongs to the glycosyl hydrolase 13 family. GlgB subfamily. In terms of assembly, monomer.

It carries out the reaction Transfers a segment of a (1-&gt;4)-alpha-D-glucan chain to a primary hydroxy group in a similar glucan chain.. It participates in glycan biosynthesis; glycogen biosynthesis. Functionally, catalyzes the formation of the alpha-1,6-glucosidic linkages in glycogen by scission of a 1,4-alpha-linked oligosaccharide from growing alpha-1,4-glucan chains and the subsequent attachment of the oligosaccharide to the alpha-1,6 position. The chain is 1,4-alpha-glucan branching enzyme GlgB from Serratia proteamaculans (strain 568).